Consider the following 296-residue polypeptide: MSKISPINIKELLDAGVHFGHKTSRWNPKMASYIYGERDDVHIIDLRQSAALMSVALNAIYETVKKDGKILFVSTKIQASDIIAEYAEKCGQYYVNNRWLGGMLTNWKTIACSIEKLEKLEKTLESEEARICYTKKEILDMSRKKDKLLLSLAGIRNLNSKPDLLVVIDTNKEHIAINEAVKLNIPVVAVVDTNSNPDNVDYPIPGNDDSIRSIRLYCSLFADAALQGLEESMKVSGVDIGTMQDHTDKALTSSKTVSKLKQSKKLSKTQNIDEETNTEFDQALGGACENNNSDNT.

The interval 252–296 (TSSKTVSKLKQSKKLSKTQNIDEETNTEFDQALGGACENNNSDNT) is disordered.

The protein belongs to the universal ribosomal protein uS2 family.

This is Small ribosomal subunit protein uS2 (rpsB) from Rickettsia prowazekii (strain Madrid E).